We begin with the raw amino-acid sequence, 759 residues long: Polyribonucleotide nucleotidyltransferase (759 aa).

Mg(2+) contacts are provided by Asp522 and Asp528. Residues 588 to 647 (PRITTIKVPVDKIGEVIGPKGKMINSITEETGASISIEDDGTVFVGASNGEAAQAAIDKI) form the KH domain. One can recognise an S1 motif domain in the interval 659–728 (GERFLGTVVK…NRGKISLVLV (70 aa)). The disordered stretch occupies residues 734–759 (AEASDNGSATPSDKAPATADATTAGN). The segment covering 741–759 (SATPSDKAPATADATTAGN) has biased composition (low complexity).

The protein belongs to the polyribonucleotide nucleotidyltransferase family. Mg(2+) is required as a cofactor.

The protein resides in the cytoplasm. It carries out the reaction RNA(n+1) + phosphate = RNA(n) + a ribonucleoside 5'-diphosphate. In terms of biological role, involved in mRNA degradation. Catalyzes the phosphorolysis of single-stranded polyribonucleotides processively in the 3'- to 5'-direction. The protein is Polyribonucleotide nucleotidyltransferase of Mycobacterium sp. (strain JLS).